Consider the following 298-residue polypeptide: Junctional adhesion molecule B (298 aa).

An N-terminal signal peptide occupies residues 1–28 (MARSPQGLLMLLLLHYLIVALDYHKANG). The Extracellular segment spans residues 29 to 236 (FSASKDHRQE…GKRMQVDVLN (208 aa)). Positions 32–128 (SKDHRQEVTV…GQNLQEDKVM (97 aa)) constitute an Ig-like V-type domain. Intrachain disulfides connect Cys-51-Cys-110 and Cys-156-Cys-214. An N-linked (GlcNAc...) asparagine glycan is attached at Asn-99. One can recognise an Ig-like C2-type domain in the interval 135–238 (PAVPACEVPT…RMQVDVLNIS (104 aa)). The chain crosses the membrane as a helical span at residues 237-257 (ISGIIATVVVVAFVISVCGLG). Over 258–298 (TCYAQRKGYFSKETSFQKGSPASKVTTMSENDFKHTKSFII) the chain is Cytoplasmic.

It belongs to the immunoglobulin superfamily. The expression in Sertoli cells is regulated by TGFB3 through ubiquitin-mediated proteasomal degradation. In terms of tissue distribution, expressed by bone marrow stromal cells (at protein level). Expressed in skin (at protein level). Expressed in testis by Sertoli cells (at protein level). Expressed by dorsal root ganglion and spinal cord neurons.

The protein localises to the cell membrane. It localises to the cell junction. Its subcellular location is the tight junction. Functionally, junctional adhesion protein that mediates heterotypic cell-cell interactions with its cognate receptor JAM3 to regulate different cellular processes. Plays a role in homing and mobilization of hematopoietic stem and progenitor cells within the bone marrow. At the surface of bone marrow stromal cells, it contributes to the retention of the hematopoietic stem and progenitor cells expressing JAM3. Plays a central role in leukocytes extravasation by facilitating not only transmigration but also tethering and rolling of leukocytes along the endothelium. Tethering and rolling of leukocytes are dependent on the binding by JAM2 of the integrin alpha-4/beta-1. Plays a role in spermatogenesis where JAM2 and JAM3, which are respectively expressed by Sertoli and germ cells, mediate an interaction between both cell types and play an essential role in the anchorage of germ cells onto Sertoli cells and the assembly of cell polarity complexes during spermatid differentiation. Also functions as an inhibitory somatodendritic cue that prevents the myelination of non-axonal parts of neurons. During myogenesis, it is involved in myocyte fusion. May also play a role in angiogenesis. The polypeptide is Junctional adhesion molecule B (Mus musculus (Mouse)).